The following is a 653-amino-acid chain: Putative clathrin assembly protein At2g25430 (653 aa).

The 137-residue stretch at 23–159 (VASNMAPDLE…ELALFERKSG (137 aa)) folds into the ENTH domain. Residues 160–171 (VSVNSGGNSSHH) are compositionally biased toward low complexity. The tract at residues 160–240 (VSVNSGGNSS…GGGGGGRDEK (81 aa)) is disordered. Residues 172–186 (SNNDDRYGRGRDDFR) are compositionally biased toward basic and acidic residues. Over residues 197-214 (NGGGGGSDFRGDNNGYGG) the composition is skewed to gly residues. Serine 221 bears the Phosphoserine mark. Phosphothreonine is present on threonine 244. Basic and acidic residues predominate over residues 376 to 389 (RAKRGKSPERKEIE). The disordered stretch occupies residues 376-431 (RAKRGKSPERKEIEAPPPVVEEEEPEPDMNEIKALPPPENYTPPPPPEPEPQPEKP). Acidic residues predominate over residues 395-404 (VEEEEPEPDM). Pro residues predominate over residues 410–425 (LPPPENYTPPPPPEPE).

It is found in the membrane. It localises to the clathrin-coated pit. The protein resides in the golgi apparatus. Its subcellular location is the cytoplasmic vesicle. The protein localises to the clathrin-coated vesicle. The chain is Putative clathrin assembly protein At2g25430 from Arabidopsis thaliana (Mouse-ear cress).